A 309-amino-acid polypeptide reads, in one-letter code: Ribosomal RNA small subunit methyltransferase H (309 aa).

S-adenosyl-L-methionine contacts are provided by residues 33 to 35 (GGH), Asp53, Phe79, Asp100, and Gln107.

Belongs to the methyltransferase superfamily. RsmH family.

It is found in the cytoplasm. The enzyme catalyses cytidine(1402) in 16S rRNA + S-adenosyl-L-methionine = N(4)-methylcytidine(1402) in 16S rRNA + S-adenosyl-L-homocysteine + H(+). Specifically methylates the N4 position of cytidine in position 1402 (C1402) of 16S rRNA. The sequence is that of Ribosomal RNA small subunit methyltransferase H from Clostridium botulinum (strain ATCC 19397 / Type A).